The primary structure comprises 180 residues: NADH-quinone oxidoreductase subunit I (180 aa).

4Fe-4S ferredoxin-type domains are found at residues 48-80 (IVLTRDPDGDERCVACNLCAVACPVDCISLQKA) and 90-119 (EFFRINFSRCIFCGLCEEACPTTAIQLTPD). [4Fe-4S] cluster contacts are provided by C60, C63, C66, C70, C99, C102, C105, and C109.

Belongs to the complex I 23 kDa subunit family. NDH-1 is composed of 13 different subunits. Subunits NuoA, H, J, K, L, M, N constitute the membrane sector of the complex. The cofactor is [4Fe-4S] cluster.

It localises to the cell inner membrane. It carries out the reaction a quinone + NADH + 5 H(+)(in) = a quinol + NAD(+) + 4 H(+)(out). NDH-1 shuttles electrons from NADH, via FMN and iron-sulfur (Fe-S) centers, to quinones in the respiratory chain. The immediate electron acceptor for the enzyme in this species is believed to be ubiquinone. Couples the redox reaction to proton translocation (for every two electrons transferred, four hydrogen ions are translocated across the cytoplasmic membrane), and thus conserves the redox energy in a proton gradient. The sequence is that of NADH-quinone oxidoreductase subunit I from Sodalis glossinidius (strain morsitans).